Here is a 1138-residue protein sequence, read N- to C-terminus: Trafficking protein particle complex subunit 9 (1138 aa).

Phosphoserine occurs at positions 557 and 944.

Belongs to the NIBP family. As to quaternary structure, component of the multisubunit TRAPP (transport protein particle) complex, which includes at least TRAPPC2, TRAPPC2L, TRAPPC3, TRAPPC3L, TRAPPC4, TRAPPC5, TRAPPC8, TRAPPC9, TRAPPC10, TRAPPC11 and TRAPPC12. Directly interacts with IKBKB and MAP3K14.

The protein localises to the golgi apparatus. Its subcellular location is the cis-Golgi network. It localises to the endoplasmic reticulum. The protein resides in the cytoplasm. Functionally, functions as an activator of NF-kappa-B through increased phosphorylation of the IKK complex. May function in neuronal cells differentiation. May play a role in vesicular transport from endoplasmic reticulum to Golgi. In Bos taurus (Bovine), this protein is Trafficking protein particle complex subunit 9 (TRAPPC9).